A 469-amino-acid polypeptide reads, in one-letter code: Probable monogalactosyldiacylglycerol synthase 2, chloroplastic (469 aa).

The N-terminal 42 residues, 1-42, are a transit peptide targeting the chloroplast; it reads MVISVATPRRSIRDAVLGGVLGAGGRQLYQPLRCAFYDGAAG.

This sequence belongs to the glycosyltransferase 28 family.

The protein localises to the plastid. The protein resides in the chloroplast membrane. It carries out the reaction a 1,2-diacyl-sn-glycerol + UDP-alpha-D-galactose = a 1,2-diacyl-3-O-(beta-D-galactosyl)-sn-glycerol + UDP + H(+). In terms of biological role, involved in the synthesis of the major structural component of photosynthetic membranes. In Oryza sativa subsp. japonica (Rice), this protein is Probable monogalactosyldiacylglycerol synthase 2, chloroplastic (MGD2).